A 198-amino-acid polypeptide reads, in one-letter code: MSYYAFEGLIPVVHPDAFVHPSAVLIGDVIVGAGVYIGPLASLRGDYGRLILEAGSNLQDGCIMHGYCDTDTIVHENGHIGHGAILHGCVVGRDALVGMNSVIMDGAVIGEESIVAAMSFVKAGFQGEARQLLVGSPARVLRQVTDQELHWKHLNTKEYQDLAIRCRTGLSETKPLTQAEENRPRLKGTTDVKPKSAQ.

A disordered region spans residues 174-198 (KPLTQAEENRPRLKGTTDVKPKSAQ). Residues 180–198 (EENRPRLKGTTDVKPKSAQ) are compositionally biased toward basic and acidic residues.

This sequence belongs to the transferase hexapeptide repeat family.

It functions in the pathway amine and polyamine metabolism; carnitine metabolism. Functionally, overproduction of CaiE stimulates the activity of CaiB and CaiD. The chain is Carnitine operon protein CaiE from Salmonella typhimurium (strain LT2 / SGSC1412 / ATCC 700720).